The sequence spans 606 residues: DNA mismatch repair protein MutL (606 aa).

The tract at residues 350 to 371 (GWRPSAPSAPWTPEASPSRPYQ) is disordered.

This sequence belongs to the DNA mismatch repair MutL/HexB family.

Its function is as follows. This protein is involved in the repair of mismatches in DNA. It is required for dam-dependent methyl-directed DNA mismatch repair. May act as a 'molecular matchmaker', a protein that promotes the formation of a stable complex between two or more DNA-binding proteins in an ATP-dependent manner without itself being part of a final effector complex. In Rhizobium rhizogenes (strain K84 / ATCC BAA-868) (Agrobacterium radiobacter), this protein is DNA mismatch repair protein MutL.